The chain runs to 750 residues: Photosystem I P700 chlorophyll a apoprotein A1 (750 aa).

Transmembrane regions (helical) follow at residues 70–93 (VFSA…FHGA), 156–179 (LYCT…FHYH), 195–219 (LNHH…HVSL), 291–309 (IAHH…GHMY), 346–369 (WHAQ…HHMY), 385–411 (LSLF…IFMV), 433–455 (AIIS…LYIH), and 531–549 (FLVH…LILL). Cys-573 and Cys-582 together coordinate [4Fe-4S] cluster. 2 consecutive transmembrane segments (helical) span residues 589–610 (HVFL…HFSW) and 664–686 (LSAY…MFLF). His-675 is a binding site for chlorophyll a'. Chlorophyll a is bound by residues Met-683 and Tyr-691. Trp-692 is a phylloquinone binding site. A helical transmembrane segment spans residues 724 to 744 (AVGVTHYLLGGIATTWAFFLA).

The protein belongs to the PsaA/PsaB family. In terms of assembly, the PsaA/B heterodimer binds the P700 chlorophyll special pair and subsequent electron acceptors. PSI consists of a core antenna complex that captures photons, and an electron transfer chain that converts photonic excitation into a charge separation. The eukaryotic PSI reaction center is composed of at least 11 subunits. It depends on P700 is a chlorophyll a/chlorophyll a' dimer, A0 is one or more chlorophyll a, A1 is one or both phylloquinones and FX is a shared 4Fe-4S iron-sulfur center. as a cofactor.

It localises to the plastid. The protein resides in the chloroplast thylakoid membrane. It carries out the reaction reduced [plastocyanin] + hnu + oxidized [2Fe-2S]-[ferredoxin] = oxidized [plastocyanin] + reduced [2Fe-2S]-[ferredoxin]. Its function is as follows. PsaA and PsaB bind P700, the primary electron donor of photosystem I (PSI), as well as the electron acceptors A0, A1 and FX. PSI is a plastocyanin-ferredoxin oxidoreductase, converting photonic excitation into a charge separation, which transfers an electron from the donor P700 chlorophyll pair to the spectroscopically characterized acceptors A0, A1, FX, FA and FB in turn. Oxidized P700 is reduced on the lumenal side of the thylakoid membrane by plastocyanin. This chain is Photosystem I P700 chlorophyll a apoprotein A1, found in Arabis hirsuta (Hairy rock-cress).